The primary structure comprises 368 residues: Agmatine deiminase (368 aa).

The active-site Amidino-cysteine intermediate is the Cys-357.

Belongs to the agmatine deiminase family. Homodimer.

It catalyses the reaction agmatine + H2O = N-carbamoylputrescine + NH4(+). It participates in amine and polyamine biosynthesis; putrescine biosynthesis via agmatine pathway; N-carbamoylputrescine from agmatine: step 1/1. Functionally, mediates the hydrolysis of agmatine into N-carbamoylputrescine in the arginine decarboxylase (ADC) pathway of putrescine biosynthesis, a basic polyamine. This is Agmatine deiminase from Pseudomonas syringae pv. syringae (strain B728a).